A 92-amino-acid chain; its full sequence is Large ribosomal subunit protein uL23c (92 aa).

Belongs to the universal ribosomal protein uL23 family. As to quaternary structure, part of the 50S ribosomal subunit.

The protein localises to the plastid. It is found in the chloroplast. Functionally, binds to 23S rRNA. In Nephroselmis olivacea (Green alga), this protein is Large ribosomal subunit protein uL23c (rpl23).